Here is a 101-residue protein sequence, read N- to C-terminus: NADH-quinone oxidoreductase subunit K (101 aa).

3 helical membrane-spanning segments follow: residues 4–24, 30–50, and 61–81; these read LAHFLVLGAILFAISIVGIFL, IVLLMAIELMLLAVNINFVAF, and VFVFFILTVAAAESAIGLAIL.

This sequence belongs to the complex I subunit 4L family. NDH-1 is composed of 14 different subunits. Subunits NuoA, H, J, K, L, M, N constitute the membrane sector of the complex.

The protein localises to the cell inner membrane. It catalyses the reaction a quinone + NADH + 5 H(+)(in) = a quinol + NAD(+) + 4 H(+)(out). Its function is as follows. NDH-1 shuttles electrons from NADH, via FMN and iron-sulfur (Fe-S) centers, to quinones in the respiratory chain. The immediate electron acceptor for the enzyme in this species is believed to be ubiquinone. Couples the redox reaction to proton translocation (for every two electrons transferred, four hydrogen ions are translocated across the cytoplasmic membrane), and thus conserves the redox energy in a proton gradient. The protein is NADH-quinone oxidoreductase subunit K of Cupriavidus necator (strain ATCC 17699 / DSM 428 / KCTC 22496 / NCIMB 10442 / H16 / Stanier 337) (Ralstonia eutropha).